The sequence spans 77 residues: Envelope glycoprotein (77 aa).

The Extracellular portion of the chain corresponds to 1–24 (LERQKNQNWYEGWFNSSPWFTTLL). The chain crosses the membrane as a helical span at residues 25 to 45 (STIAGPLLLLLLLLILGPCII). Cys-43 carries the S-palmitoyl cysteine; by host lipid modification. Over 46–77 (NRLVQFINNRVSAVKILVLRQKYQTLDNEDNL) the chain is Cytoplasmic. Residues 68–71 (YQTL) carry the YXXL motif; contains endocytosis signal motif.

In terms of assembly, the mature envelope protein (Env) consists of a trimer of SU-TM heterodimers attached by noncovalent interactions or by a labile interchain disulfide bond. In terms of processing, specific enzymatic cleavages in vivo yield mature proteins. Envelope glycoproteins are synthesized as an inactive precursor that is N-glycosylated and processed likely by host cell furin or by a furin-like protease in the Golgi to yield the mature SU and TM proteins. The cleavage site between SU and TM requires the minimal sequence [KR]-X-[KR]-R. The R-peptide is released from the C-terminus of the cytoplasmic tail of the TM protein upon particle formation as a result of proteolytic cleavage by the viral protease. Cleavage of this peptide is required for TM to become fusogenic. The transmembrane protein is palmitoylated. Post-translationally, the R-peptide is palmitoylated.

It localises to the virion membrane. It is found in the host cell membrane. Its function is as follows. The surface protein (SU) attaches the virus to the host cell by binding to its receptor. This interaction triggers the refolding of the transmembrane protein (TM) and is thought to activate its fusogenic potential by unmasking its fusion peptide. Fusion occurs at the host cell plasma membrane. Functionally, the transmembrane protein (TM) acts as a class I viral fusion protein. Under the current model, the protein has at least 3 conformational states: pre-fusion native state, pre-hairpin intermediate state, and post-fusion hairpin state. During viral and target cell membrane fusion, the coiled coil regions (heptad repeats) assume a trimer-of-hairpins structure, positioning the fusion peptide in close proximity to the C-terminal region of the ectodomain. The formation of this structure appears to drive apposition and subsequent fusion of viral and target cell membranes. Membranes fusion leads to delivery of the nucleocapsid into the cytoplasm. The sequence is that of Envelope glycoprotein (env) from Woolly monkey sarcoma virus (WMSV).